The following is a 128-amino-acid chain: Ribosome-binding factor A (128 aa).

It belongs to the RbfA family. Monomer. Binds 30S ribosomal subunits, but not 50S ribosomal subunits or 70S ribosomes.

The protein localises to the cytoplasm. Functionally, one of several proteins that assist in the late maturation steps of the functional core of the 30S ribosomal subunit. Associates with free 30S ribosomal subunits (but not with 30S subunits that are part of 70S ribosomes or polysomes). Required for efficient processing of 16S rRNA. May interact with the 5'-terminal helix region of 16S rRNA. The polypeptide is Ribosome-binding factor A (Haemophilus influenzae (strain ATCC 51907 / DSM 11121 / KW20 / Rd)).